Reading from the N-terminus, the 52-residue chain is Conotoxin reg3h (52 aa).

Residue alanine 1 is a signal peptide. Residues 2–33 constitute a propeptide that is removed on maturation; that stretch reads LPLDGDQPADQPAERMQDISPELNPLFHPVKR. 3 disulfides stabilise this stretch: cysteine 35/cysteine 49, cysteine 36/cysteine 47, and cysteine 41/cysteine 50. A 4-hydroxyproline mark is found at proline 38, proline 48, and proline 51. Residue asparagine 52 is modified to Asparagine amide.

In terms of tissue distribution, expressed by the venom duct.

It localises to the secreted. The chain is Conotoxin reg3h from Conus regius (Crown cone).